The chain runs to 263 residues: Indole-3-glycerol phosphate synthase (263 aa).

It belongs to the TrpC family.

The enzyme catalyses 1-(2-carboxyphenylamino)-1-deoxy-D-ribulose 5-phosphate + H(+) = (1S,2R)-1-C-(indol-3-yl)glycerol 3-phosphate + CO2 + H2O. It functions in the pathway amino-acid biosynthesis; L-tryptophan biosynthesis; L-tryptophan from chorismate: step 4/5. The chain is Indole-3-glycerol phosphate synthase from Sulfurimonas denitrificans (strain ATCC 33889 / DSM 1251) (Thiomicrospira denitrificans (strain ATCC 33889 / DSM 1251)).